We begin with the raw amino-acid sequence, 80 residues long: Acyl carrier protein (80 aa).

Residues 4 to 79 (NSIEEKVRSI…DVVAYIEKVQ (76 aa)) enclose the Carrier domain. S39 is modified (O-(pantetheine 4'-phosphoryl)serine).

It belongs to the acyl carrier protein (ACP) family. 4'-phosphopantetheine is transferred from CoA to a specific serine of apo-ACP by AcpS. This modification is essential for activity because fatty acids are bound in thioester linkage to the sulfhydryl of the prosthetic group.

It is found in the cytoplasm. It participates in lipid metabolism; fatty acid biosynthesis. Its function is as follows. Carrier of the growing fatty acid chain in fatty acid biosynthesis. This chain is Acyl carrier protein, found in Akkermansia muciniphila (strain ATCC BAA-835 / DSM 22959 / JCM 33894 / BCRC 81048 / CCUG 64013 / CIP 107961 / Muc).